We begin with the raw amino-acid sequence, 1434 residues long: Gag-Pol polyprotein (1434 aa).

Gly-2 carries the N-myristoyl glycine; by host lipid modification. An interaction with Gp41 region spans residues 7 to 31 (VLSGGELDKWEKIRLRPGGKKKYQL). The interaction with host CALM1 stretch occupies residues 8–43 (LSGGELDKWEKIRLRPGGKKKYQLKHIVWASRELER). Residues 12-19 (ELDKWEKI) are interaction with host AP3D1. The segment at 14–33 (DKWEKIRLRPGGKKKYQLKH) is interaction with membrane phosphatidylinositol 4,5-bisphosphate and RNA. The short motif at 16-22 (WEKIRLR) is the Nuclear export signal element. The Nuclear localization signal signature appears at 26-32 (KKKYQLK). Positions 73-77 (EEIRS) are interaction with membrane phosphatidylinositol 4,5-bisphosphate. The disordered stretch occupies residues 106 to 128 (EEQNKSKKKAQQTAADTGNSSQV). Residues 116 to 128 (QQTAADTGNSSQV) show a composition bias toward polar residues. Tyr-132 bears the Phosphotyrosine; by host mark. Residues 189 to 227 (NTVGGHQAAMQMLKETINEEAAEWDRLHPVHAGPIAPGQ) form an interaction with human PPIA/CYPA and NUP153 region. A dimerization/Multimerization of capsid protein p24 region spans residues 277–363 (YSPTSILDIR…GGPGHKARVL (87 aa)). 2 consecutive CCHC-type zinc fingers follow at residues 389–406 (VKCF…NCRA) and 410–427 (KGCW…DCTE). The interval 443 to 480 (KAREFSSEQTRANSPTSRELRVWGRDNNSPSEAGADRQ) is disordered. The span at 449-459 (SEQTRANSPTS) shows a compositional bias: polar residues. The interval 488 to 492 (PQITL) is dimerization of protease. The Peptidase A2 domain maps to 507 to 576 (KEALLDTGAD…TPVNIIGRNL (70 aa)). Asp-512 (for protease activity; shared with dimeric partner) is an active-site residue. Dimerization of protease regions lie at residues 536-542 (GIGGFIK) and 575-587 (NLLT…LNFP). One can recognise a Reverse transcriptase domain in the interval 630 to 820 (EGKISKVGPE…PPFLWMGYEL (191 aa)). Mg(2+) is bound by residues Asp-696, Asp-771, and Asp-772. The tract at residues 813–821 (FLWMGYELH) is RT 'primer grip'. A Tryptophan repeat motif motif is present at residues 984-1000 (WEAWWTEYWQATWIPEW). The region spanning 1020–1143 (IVGAETFYVD…VDKLVSAGIR (124 aa)) is the RNase H type-1 domain. The Mg(2+) site is built by Asp-1029, Glu-1064, Asp-1084, and Asp-1135. Residues 1149–1190 (DGIDKAQEEHEKYHSNWRAMASDFNLPPVVAKEIVASCDKCQ) form an Integrase-type zinc finger. Zn(2+) contacts are provided by His-1158, His-1162, Cys-1186, and Cys-1189. The Integrase catalytic domain occupies 1200 to 1350 (VDCSPGIWQL…SAGERIVDII (151 aa)). Mg(2+) contacts are provided by Asp-1210, Asp-1262, and Glu-1298. A DNA-binding region (integrase-type) is located at residues 1369-1416 (FRVYYRDSREPLWKGPAKLLWKGEGAVVIQDNSDIKVVPRRKAKIIRD).

In terms of assembly, homotrimer; further assembles as hexamers of trimers. Interacts with gp41 (via C-terminus). Interacts with host CALM1; this interaction induces a conformational change in the Matrix protein, triggering exposure of the myristate group. Interacts with host AP3D1; this interaction allows the polyprotein trafficking to multivesicular bodies during virus assembly. Part of the pre-integration complex (PIC) which is composed of viral genome, matrix protein, Vpr and integrase. Homodimer; the homodimer further multimerizes as homohexamers or homopentamers. Interacts with human PPIA/CYPA; This interaction stabilizes the capsid. Interacts with human NUP153. Interacts with host PDZD8; this interaction stabilizes the capsid. Interacts with monkey TRIM5; this interaction destabilizes the capsid. As to quaternary structure, homodimer, whose active site consists of two apposed aspartic acid residues. In terms of assembly, heterodimer of p66 RT and p51 RT (RT p66/p51). Heterodimerization of RT is essential for DNA polymerase activity. The overall folding of the subdomains is similar in p66 RT and p51 RT but the spatial arrangements of the subdomains are dramatically different. Homotetramer; may further associate as a homohexadecamer. Part of the pre-integration complex (PIC) which is composed of viral genome, matrix protein, Vpr and integrase. Interacts with human SMARCB1/INI1 and human PSIP1/LEDGF isoform 1. Interacts with human KPNA3; this interaction might play a role in nuclear import of the pre-integration complex. Interacts with human NUP153; this interaction might play a role in nuclear import of the pre-integration complex. It depends on Mg(2+) as a cofactor. In terms of processing, specific enzymatic cleavages by the viral protease yield mature proteins. The protease is released by autocatalytic cleavage. The polyprotein is cleaved during and after budding, this process is termed maturation. Proteolytic cleavage of p66 RT removes the RNase H domain to yield the p51 RT subunit. Nucleocapsid protein p7 might be further cleaved after virus entry. Post-translationally, tyrosine phosphorylated presumably in the virion by a host kinase. Phosphorylation is apparently not a major regulator of membrane association. Phosphorylated possibly by host MAPK1; this phosphorylation is necessary for Pin1-mediated virion uncoating. In terms of processing, methylated by host PRMT6, impairing its function by reducing RNA annealing and the initiation of reverse transcription.

The protein resides in the host cell membrane. It is found in the host endosome. Its subcellular location is the host multivesicular body. It localises to the virion membrane. The protein localises to the host nucleus. The protein resides in the host cytoplasm. It is found in the virion. It catalyses the reaction Specific for a P1 residue that is hydrophobic, and P1' variable, but often Pro.. The enzyme catalyses Endohydrolysis of RNA in RNA/DNA hybrids. Three different cleavage modes: 1. sequence-specific internal cleavage of RNA. Human immunodeficiency virus type 1 and Moloney murine leukemia virus enzymes prefer to cleave the RNA strand one nucleotide away from the RNA-DNA junction. 2. RNA 5'-end directed cleavage 13-19 nucleotides from the RNA end. 3. DNA 3'-end directed cleavage 15-20 nucleotides away from the primer terminus.. The catalysed reaction is 3'-end directed exonucleolytic cleavage of viral RNA-DNA hybrid.. It carries out the reaction DNA(n) + a 2'-deoxyribonucleoside 5'-triphosphate = DNA(n+1) + diphosphate. Protease: The viral protease is inhibited by many synthetic protease inhibitors (PIs), such as amprenavir, atazanavir, indinavir, loprinavir, nelfinavir, ritonavir and saquinavir. Use of protease inhibitors in tritherapy regimens permit more ambitious therapeutic strategies. Reverse transcriptase/ribonuclease H: RT can be inhibited either by nucleoside RT inhibitors (NRTIs) or by non nucleoside RT inhibitors (NNRTIs). NRTIs act as chain terminators, whereas NNRTIs inhibit DNA polymerization by binding a small hydrophobic pocket near the RT active site and inducing an allosteric change in this region. Classical NRTIs are abacavir, adefovir (PMEA), didanosine (ddI), lamivudine (3TC), stavudine (d4T), tenofovir (PMPA), zalcitabine (ddC), and zidovudine (AZT). Classical NNRTIs are atevirdine (BHAP U-87201E), delavirdine, efavirenz (DMP-266), emivirine (I-EBU), and nevirapine (BI-RG-587). The tritherapies used as a basic effective treatment of AIDS associate two NRTIs and one NNRTI. Mediates, with Gag polyprotein, the essential events in virion assembly, including binding the plasma membrane, making the protein-protein interactions necessary to create spherical particles, recruiting the viral Env proteins, and packaging the genomic RNA via direct interactions with the RNA packaging sequence (Psi). Gag-Pol polyprotein may regulate its own translation, by the binding genomic RNA in the 5'-UTR. At low concentration, the polyprotein would promote translation, whereas at high concentration, the polyprotein would encapsidate genomic RNA and then shut off translation. Functionally, targets the polyprotein to the plasma membrane via a multipartite membrane-binding signal, that includes its myristoylated N-terminus. Matrix protein is part of the pre-integration complex. Implicated in the release from host cell mediated by Vpu. Binds to RNA. In terms of biological role, forms the conical core that encapsulates the genomic RNA-nucleocapsid complex in the virion. Most core are conical, with only 7% tubular. The core is constituted by capsid protein hexamer subunits. The core is disassembled soon after virion entry. Host restriction factors such as TRIM5-alpha or TRIMCyp bind retroviral capsids and cause premature capsid disassembly, leading to blocks in reverse transcription. Capsid restriction by TRIM5 is one of the factors which restricts HIV-1 to the human species. Host PIN1 apparently facilitates the virion uncoating. On the other hand, interactions with PDZD8 or CYPA stabilize the capsid. Its function is as follows. Encapsulates and protects viral dimeric unspliced genomic RNA (gRNA). Binds these RNAs through its zinc fingers. Acts as a nucleic acid chaperone which is involved in rearangement of nucleic acid secondary structure during gRNA retrotranscription. Also facilitates template switch leading to recombination. As part of the polyprotein, participates in gRNA dimerization, packaging, tRNA incorporation and virion assembly. Aspartyl protease that mediates proteolytic cleavages of Gag and Gag-Pol polyproteins during or shortly after the release of the virion from the plasma membrane. Cleavages take place as an ordered, step-wise cascade to yield mature proteins. This process is called maturation. Displays maximal activity during the budding process just prior to particle release from the cell. Also cleaves Nef and Vif, probably concomitantly with viral structural proteins on maturation of virus particles. Hydrolyzes host EIF4GI and PABP1 in order to shut off the capped cellular mRNA translation. The resulting inhibition of cellular protein synthesis serves to ensure maximal viral gene expression and to evade host immune response. Also mediates cleavage of host YTHDF3. Mediates cleavage of host CARD8, thereby activating the CARD8 inflammasome, leading to the clearance of latent HIV-1 in patient CD4(+) T-cells after viral reactivation; in contrast, HIV-1 can evade CARD8-sensing when its protease remains inactive in infected cells prior to viral budding. Functionally, multifunctional enzyme that converts the viral RNA genome into dsDNA in the cytoplasm, shortly after virus entry into the cell. This enzyme displays a DNA polymerase activity that can copy either DNA or RNA templates, and a ribonuclease H (RNase H) activity that cleaves the RNA strand of RNA-DNA heteroduplexes in a partially processive 3' to 5' endonucleasic mode. Conversion of viral genomic RNA into dsDNA requires many steps. A tRNA(3)-Lys binds to the primer-binding site (PBS) situated at the 5'-end of the viral RNA. RT uses the 3' end of the tRNA primer to perform a short round of RNA-dependent minus-strand DNA synthesis. The reading proceeds through the U5 region and ends after the repeated (R) region which is present at both ends of viral RNA. The portion of the RNA-DNA heteroduplex is digested by the RNase H, resulting in a ssDNA product attached to the tRNA primer. This ssDNA/tRNA hybridizes with the identical R region situated at the 3' end of viral RNA. This template exchange, known as minus-strand DNA strong stop transfer, can be either intra- or intermolecular. RT uses the 3' end of this newly synthesized short ssDNA to perform the RNA-dependent minus-strand DNA synthesis of the whole template. RNase H digests the RNA template except for two polypurine tracts (PPTs) situated at the 5'-end and near the center of the genome. It is not clear if both polymerase and RNase H activities are simultaneous. RNase H probably can proceed both in a polymerase-dependent (RNA cut into small fragments by the same RT performing DNA synthesis) and a polymerase-independent mode (cleavage of remaining RNA fragments by free RTs). Secondly, RT performs DNA-directed plus-strand DNA synthesis using the PPTs that have not been removed by RNase H as primers. PPTs and tRNA primers are then removed by RNase H. The 3' and 5' ssDNA PBS regions hybridize to form a circular dsDNA intermediate. Strand displacement synthesis by RT to the PBS and PPT ends produces a blunt ended, linear dsDNA copy of the viral genome that includes long terminal repeats (LTRs) at both ends. In terms of biological role, catalyzes viral DNA integration into the host chromosome, by performing a series of DNA cutting and joining reactions. This enzyme activity takes place after virion entry into a cell and reverse transcription of the RNA genome in dsDNA. The first step in the integration process is 3' processing. This step requires a complex comprising the viral genome, matrix protein, Vpr and integrase. This complex is called the pre-integration complex (PIC). The integrase protein removes 2 nucleotides from each 3' end of the viral DNA, leaving recessed CA OH's at the 3' ends. In the second step, the PIC enters cell nucleus. This process is mediated through integrase and Vpr proteins, and allows the virus to infect a non dividing cell. This ability to enter the nucleus is specific of lentiviruses, other retroviruses cannot and rely on cell division to access cell chromosomes. In the third step, termed strand transfer, the integrase protein joins the previously processed 3' ends to the 5' ends of strands of target cellular DNA at the site of integration. The 5'-ends are produced by integrase-catalyzed staggered cuts, 5 bp apart. A Y-shaped, gapped, recombination intermediate results, with the 5'-ends of the viral DNA strands and the 3' ends of target DNA strands remaining unjoined, flanking a gap of 5 bp. The last step is viral DNA integration into host chromosome. This involves host DNA repair synthesis in which the 5 bp gaps between the unjoined strands are filled in and then ligated. Since this process occurs at both cuts flanking the HIV genome, a 5 bp duplication of host DNA is produced at the ends of HIV-1 integration. Alternatively, Integrase may catalyze the excision of viral DNA just after strand transfer, this is termed disintegration. In Homo sapiens (Human), this protein is Gag-Pol polyprotein (gag-pol).